The primary structure comprises 528 residues: Major facilitator superfamily multidrug transporter mdr3 (528 aa).

The interval 1-37 (MLAMAASAEETNRQSNAGRRSVISPSEAPPEAEQSDV) is disordered. 7 helical membrane-spanning segments follow: residues 50–70 (FILILCSTQLFVQGAFGYILI), 91–111 (WHVGGYSLTVGTFILIAGKLG), 119–139 (ILVLGWAWFGVWSVIGGCSAF), 149–169 (ARALQGIGPALLLPNALAIAG), 180–200 (MIFSAFAVAAPLGCFTAGVVG), 211–231 (WVMWTYSIGCFIIAAVGLWVI), and 241–261 (AATLQFDYIGSVLGVAGLLLL). A glycan (N-linked (GlcNAc...) asparagine) is linked at Asn-262. 5 consecutive transmembrane segments (helical) span residues 272–292 (GWSTPYVYVLLIGGFLVLGLF), 340–360 (VITSGWLMAIACAAFLGGCIL), 375–395 (FWSFVIMAWGMDISFPASTTI), 410–430 (SLVNTVINYSIAIGLGIAGTV), and 448–468 (ALWSSVGLAALAFGIALVFAV).

The protein belongs to the major facilitator superfamily.

The protein resides in the cell membrane. In terms of biological role, major facilitator superfamily transporter that confers resistance to azoles such as itraconazole. The polypeptide is Major facilitator superfamily multidrug transporter mdr3 (Aspergillus fumigatus (strain ATCC MYA-4609 / CBS 101355 / FGSC A1100 / Af293) (Neosartorya fumigata)).